A 261-amino-acid chain; its full sequence is MSITSIPQPHETNEQHHTEIQHHRSAILNNDLVVLISIAFSALLYFIFDKDNFEKNPCLRLITTLFPLSYLAAQHLLLFHTSWKGNNKPEDTLHKALRYFFSALFITFATIFILSIIILTNDNWSKDDDPLFFSIVLPSFFIPPTYLLSISCSLVPGQTGFTDTGINILIDVLILLCFIVNFIFMHEKSKYRLYSAVTFPLLVLVRLLTEKYYPSGKSSLPTTTWRVVAFVLIFILVIYTYTDMGCEAILTLDYYFTYLTR.

The tract at residues 1–20 is disordered; the sequence is MSITSIPQPHETNEQHHTEI. Residues 11–20 are compositionally biased toward basic and acidic residues; that stretch reads ETNEQHHTEI.

The protein belongs to the UPF0328 family.

This Encephalitozoon cuniculi (strain GB-M1) (Microsporidian parasite) protein is UPF0328 protein ECU02_0020/ECU04_1700.